We begin with the raw amino-acid sequence, 415 residues long: MAQANLSEILFKPKFKHPETSTLVRRTHCNHVVNIHSALDGDTANHWYRMINRLMWTWRGIDPLEIEEVLSRIACSKAEHSNNELLDTVVGYRNGNWIYEWANQGMMWQQKAMEETDPGSAGQFWLNAANLYSIASYPHLKGDELSEQAEVLSNRAYEEAAKYLPYTLKELTFPISDGGSLSGFLHMPTVGSAPFPTVLMCGGLDTLQSDYHRLFRDYLEPKGIAMLTIDLPSVGASSRWKLTQDTSYLHQQVLQALADVPWVDHQRVSVFGFRFGANVAVRLGYLEPQRVRAVACLGPIVHHLLCNSDSLRKVPDMYMDVMASRLGMADSTDETLNTEMNRYSLKTQGLLGRRCQTPMLAGFWENDPFSPKEEAKLICSSSADGKLLAIPSKPLYENFHRALLQTSEWLEDKMR.

The protein belongs to the FrsA family.

It catalyses the reaction a carboxylic ester + H2O = an alcohol + a carboxylate + H(+). Its function is as follows. Catalyzes the hydrolysis of esters. The sequence is that of Esterase FrsA from Yersinia pseudotuberculosis serotype O:1b (strain IP 31758).